Reading from the N-terminus, the 317-residue chain is MISLRQHAFSLAAVFLALAVGVVLGSGFLSDTLLSSLRDEKRDLYTQISGLNDQKNMLNEKVSAANNFDNQLLGRIVHDVLGGTSVVVFRTPDAKDDDVAAVSKIVVQAGGTVTGTVSLTQEFVDANSTEKLRSVVNSSILPAGAQLSTKLVDQGSQAGDLLGITLLVNANPAVPNVGDAQRSTVLVALRDTGFITYQTYNRNDHLGAANAALVITGGLLPQDAGNQGVSVARFSAALAPHGSGTLLAGRDGSATGVAAVAVARADAGMAATISTVDNVDAEPGRITAILGLHDLLSGGHTGQYGVGHGATSITVPQ.

Positions Met-1–Phe-28 are cleaved as a signal peptide.

This sequence belongs to the MctB (TC 1.B.50) family.

It is found in the cell outer membrane. Pore-forming protein, which is involved in efflux of copper across the outer membrane. Essential for copper resistance and maintenance of a low intracellular copper concentration. This chain is Copper transporter MctB (mctB), found in Mycobacterium leprae (strain TN).